A 344-amino-acid polypeptide reads, in one-letter code: Ferredoxin--NADP reductase (344 aa).

Residues D36, Q44, Y49, V89, F127, D291, and T332 each coordinate FAD.

It belongs to the ferredoxin--NADP reductase type 2 family. Homodimer. FAD is required as a cofactor.

The catalysed reaction is 2 reduced [2Fe-2S]-[ferredoxin] + NADP(+) + H(+) = 2 oxidized [2Fe-2S]-[ferredoxin] + NADPH. The chain is Ferredoxin--NADP reductase from Beijerinckia indica subsp. indica (strain ATCC 9039 / DSM 1715 / NCIMB 8712).